Here is a 134-residue protein sequence, read N- to C-terminus: MALYEHVFLARQDVTSQQVESMIEAYKGVIESNGGKVEKTEMWGVKSLAYRIKKNRKAHFTLLNIDAPPAALAEMERQMRISEDILRFLTIRVDALEGEPSAMMQKRDRDERKDRERGRRRDDDGYVGERNEEG.

Positions 99–134 are disordered; sequence EPSAMMQKRDRDERKDRERGRRRDDDGYVGERNEEG. Positions 105 to 134 are enriched in basic and acidic residues; the sequence is QKRDRDERKDRERGRRRDDDGYVGERNEEG.

The protein belongs to the bacterial ribosomal protein bS6 family.

In terms of biological role, binds together with bS18 to 16S ribosomal RNA. The chain is Small ribosomal subunit protein bS6 from Methylobacterium sp. (strain 4-46).